The following is a 1147-amino-acid chain: Putative ATP-dependent RNA helicase L377 (1147 aa).

One can recognise a Helicase ATP-binding domain in the interval 108–315 (INPNTPYRGL…VELINYLRPK (208 aa)). Position 121–128 (121–128 (WGTGVGKS)) interacts with ATP. The DEAH box motif lies at 264 to 267 (DEAH).

Belongs to the DEAD box helicase family. DEAH subfamily.

It is found in the virion. It carries out the reaction ATP + H2O = ADP + phosphate + H(+). The chain is Putative ATP-dependent RNA helicase L377 from Acanthamoeba polyphaga (Amoeba).